We begin with the raw amino-acid sequence, 249 residues long: (2S)-[(R)-hydroxy(phenyl)methyl]succinyl-CoA dehydrogenase subunit BbsC (249 aa).

This sequence belongs to the short-chain dehydrogenases/reductases (SDR) family. As to quaternary structure, heterotetramer composed of 2 inactive BbsC subunits and 2 active BbsD subunits.

The protein operates within xenobiotic degradation; toluene degradation. Involved in an anaerobic toluene degradation pathway. Catalytically inactive subunit, which is probably required for the structural and/or regulatory integrity of the catalytic subunit BbsD. This subunit cannot bind NAD(+) or substrate. This Thauera aromatica protein is (2S)-[(R)-hydroxy(phenyl)methyl]succinyl-CoA dehydrogenase subunit BbsC.